The chain runs to 122 residues: Small ribosomal subunit protein uS13 (122 aa).

Residues 95–122 (GLPVRGQRTHTNARTRKGPAKPIAGKKK) form a disordered region.

The protein belongs to the universal ribosomal protein uS13 family. Part of the 30S ribosomal subunit. Forms a loose heterodimer with protein S19. Forms two bridges to the 50S subunit in the 70S ribosome.

Functionally, located at the top of the head of the 30S subunit, it contacts several helices of the 16S rRNA. In the 70S ribosome it contacts the 23S rRNA (bridge B1a) and protein L5 of the 50S subunit (bridge B1b), connecting the 2 subunits; these bridges are implicated in subunit movement. Contacts the tRNAs in the A and P-sites. This is Small ribosomal subunit protein uS13 from Caulobacter sp. (strain K31).